The sequence spans 483 residues: Protein EFFECTOR OF TRANSCRIPTION 2 (483 aa).

The GIY-YIG domain occupies 64–112; it reads SCPGLYELGVAVIGQEQCRKLEPDIVLASYLGQAESVRSRLQRYGRSGA. Cx9Cx9RCx2HK repeat units lie at residues 278–303 and 338–363; these read CGVL…IEHK and CGVI…EDHK. Residues 380 to 396 show a composition bias toward basic and acidic residues; it reads EKTVKDEKPDPESHTES. Positions 380–399 are disordered; the sequence is EKTVKDEKPDPESHTESIEE. Cx9Cx9RCx2HK repeat units follow at residues 406–431 and 453–478; these read CEAT…WQHK and CGVK…EEHK.

As to expression, expressed in vascular tissues of stems, hypocotyls, leaves and flowers. Expressed in the vascular bundles of xylem in shoot parenchyma cells. Expressed in the remnant cytoplasm of differentiated fiber cells and in protoxylem element of parenchymal cells.

It localises to the cytoplasm. The protein localises to the nucleus. Transcriptional regulator involved in the regulation of cell differentiation in meristems. Probably regulates the expression of various KNAT genes involved in the maintenance of the cells in an undifferentiated, merismastic state. Plays a role in the regulation of gibberellin 20 oxidase and the gibberellin-regulated protein GASA4. Localizes in the nucleus during the cellular differentiation state and may act via a single strand cutting domain. Transcriptional regulator required for the induction of dormancy during late seed development. Interacts genetically with FUS3 and may be component of the same regulatory pathway during embryogenesis. Binds both linear and supercoiled DNA without sequence preference. The protein is Protein EFFECTOR OF TRANSCRIPTION 2 of Arabidopsis thaliana (Mouse-ear cress).